We begin with the raw amino-acid sequence, 713 residues long: Segment polarity protein dishevelled homolog DVL-3 (713 aa).

Positions 1–82 (MGETKVIYHL…RVVCWLVSAD (82 aa)) constitute a DIX domain. Composition is skewed to polar residues over residues 87–98 (DAGSVCADNQSD) and 118–127 (HPNTRGSQEN). Residues 87–235 (DAGSVCADNQ…PRIERSSSFS (149 aa)) are disordered. The segment covering 140 to 155 (AHRERPRRKETPEHAT) has biased composition (basic and acidic residues). The span at 173-189 (ESSSTLMSSELDSTSFF) shows a compositional bias: low complexity. A compositionally biased stretch (polar residues) spans 199–210 (RFSNSTEQSSAS). The segment covering 212–225 (LMRRHKRRRRKPKA) has biased composition (basic residues). The PDZ domain maps to 248 to 333 (TVTLNMEKYN…KPGPITLTVA (86 aa)). Residues 421–495 (PESGLEVRDR…SEQCYYIFGD (75 aa)) form the DEP domain. Positions 508 to 518 (HDGSSGTSDQD) are enriched in polar residues. Disordered regions lie at residues 508-527 (HDGS…PHPG) and 545-652 (YSPH…GPPG). Positions 564 to 579 (GSQHSEGSRSSGSNRS) are enriched in low complexity. Basic and acidic residues-rich tracts occupy residues 580–593 (STEK…KGGD) and 602–618 (ESDH…RAAS). A compositionally biased stretch (basic residues) spans 629–646 (HRSHHSIAHSIRSHHTHH).

Belongs to the DSH family.

The protein localises to the cytoplasm. Functionally, involved in the signal transduction pathway mediated by multiple Wnt genes. Required during ciliogenesis for the docking of basal bodies to the apical plasma membrane. The polypeptide is Segment polarity protein dishevelled homolog DVL-3 (Xenopus tropicalis (Western clawed frog)).